The following is a 261-amino-acid chain: Bidirectional sugar transporter SWEET1b (261 aa).

The Extracellular segment spans residues 1-6; that stretch reads MEDLAK. Residues 7 to 27 traverse the membrane as a helical segment; the sequence is FLFGVSGNVIALFLFLSPVPT. Positions 7-95 constitute a MtN3/slv 1 domain; it reads FLFGVSGNVI…VVFLVFASTH (89 aa). Residues 28-42 are Cytoplasmic-facing; it reads FWRIIRRKSTEDFSG. A helical transmembrane segment spans residues 43–63; that stretch reads VPYNMTLINCLLSAWYGLPFV. The Extracellular portion of the chain corresponds to 64–71; sequence SPNNILVS. The chain crosses the membrane as a helical span at residues 72-92; the sequence is TINGAGAVIETAYVVVFLVFA. At 93 to 101 the chain is on the cytoplasmic side; sequence STHKTRLRT. The chain crosses the membrane as a helical span at residues 102-122; it reads LGLAAAVASVFAAVALVSLLA. Residues 123 to 129 lie on the Extracellular side of the membrane; the sequence is LHGQHRK. The helical transmembrane segment at 130-150 threads the bilayer; the sequence is LLCGVAATVCSICMYASPLSI. In terms of domain architecture, MtN3/slv 2 spans 133-215; that stretch reads GVAATVCSIC…VLYAIYRNNK (83 aa). Residues 151-164 lie on the Cytoplasmic side of the membrane; the sequence is MRLVIKTKSVEYMP. A helical transmembrane segment spans residues 165-185; the sequence is FLMSLAVFLCGTSWFIYGLLG. The Extracellular portion of the chain corresponds to 186–189; it reads RDPF. A helical transmembrane segment spans residues 190-210; sequence VTIPNGCGSFLGAVQLVLYAI. Topologically, residues 211-261 are cytoplasmic; it reads YRNNKGAGGGSGGKQAGDDDVEMAEGRNNKVADGGAADDDSTAGGKAGTEV. Residues 218–261 form a disordered region; the sequence is GGGSGGKQAGDDDVEMAEGRNNKVADGGAADDDSTAGGKAGTEV.

The protein belongs to the SWEET sugar transporter family. Forms homodimers. Highly expressed in leaves. Expressed at very low levels in roots, stems and panicles.

The protein localises to the cell membrane. The enzyme catalyses D-glucose(out) = D-glucose(in). It carries out the reaction D-galactose(in) = D-galactose(out). Its function is as follows. Mediates transport of sugars across the plasma membrane. Can transport glucose and galactose, but not fructose, mannose and sucrose. The chain is Bidirectional sugar transporter SWEET1b (SWEET1B) from Oryza sativa subsp. japonica (Rice).